A 1015-amino-acid polypeptide reads, in one-letter code: GTPase-activating Rap/Ran-GAP domain-like protein 3 (1015 aa).

The region spanning 200–416 is the Rap-GAP domain; it reads LLVLEEQEGS…RTLDMLIRSL (217 aa). Residues 498–812 form the CNH domain; sequence PYDIVCGDSW…QLTASRSDIY (315 aa). 2 disordered regions span residues 821-842 and 924-1004; these read SASNCSSRDTSSQSSPQTPTGY and ELLG…FTFS. Low complexity predominate over residues 823–835; the sequence is SNCSSRDTSSQSS. Basic and acidic residues predominate over residues 949–959; that stretch reads KNKEEEQKRTA.

It belongs to the GARNL3 family.

This is GTPase-activating Rap/Ran-GAP domain-like protein 3 (garnl3) from Danio rerio (Zebrafish).